Here is a 469-residue protein sequence, read N- to C-terminus: Actin-related protein 4 (469 aa).

A disordered region spans residues 104–136 (PERSTPPSKKGINISDDGDVPMEDDGNNNEDAT). Residues 119–136 (DDGDVPMEDDGNNNEDAT) show a composition bias toward acidic residues.

Belongs to the actin family. ARP4 subfamily. Component of the NuA4 histone acetyltransferase complex, of the INO80 chromatin remodeling complex, and of the SWR1 chromatin remodeling complex.

Its subcellular location is the nucleus. In terms of biological role, chromatin interaction component of the NuA4 histone acetyltransferase complex which is involved in transcriptional activation of selected genes principally by acetylation of nucleosomal histone H4 and H2A. The NuA4 complex is also involved in DNA repair. Is required for NuA4 complex integrity. Component of the SWR1 complex which mediates the ATP-dependent exchange of histone H2A for the H2A variant H2A.Z leading to transcriptional regulation of selected genes by chromatin remodeling. Component of the INO80 complex which remodels chromatin by shifting nucleosomes and is involved in DNA repair. In Neurospora crassa (strain ATCC 24698 / 74-OR23-1A / CBS 708.71 / DSM 1257 / FGSC 987), this protein is Actin-related protein 4 (arp-4).